The primary structure comprises 139 residues: MPSRPDKNLETFPNPTQERDYHIHMEIPEFTCLCPKTGQPDFATLILDYIPDKKCVELKSLKLYIWSFRDENAFHEAVTNRIVDDLATALQPRYLRLTAKFYVRGGIFTTVVAEHRHSGWTPLPSVDLFHFDSQPSTRG.

The Thioimide intermediate role is filled by Cys-34. The Proton donor role is filled by Asp-41. Substrate is bound by residues 56–58 and 75–76; these read VEL and HE.

This sequence belongs to the GTP cyclohydrolase I family. QueF type 1 subfamily.

Its subcellular location is the cytoplasm. The catalysed reaction is 7-aminomethyl-7-carbaguanine + 2 NADP(+) = 7-cyano-7-deazaguanine + 2 NADPH + 3 H(+). It participates in tRNA modification; tRNA-queuosine biosynthesis. Functionally, catalyzes the NADPH-dependent reduction of 7-cyano-7-deazaguanine (preQ0) to 7-aminomethyl-7-deazaguanine (preQ1). The polypeptide is NADPH-dependent 7-cyano-7-deazaguanine reductase (Nitrosospira multiformis (strain ATCC 25196 / NCIMB 11849 / C 71)).